The sequence spans 287 residues: Glutamate racemase (287 aa).

The segment covering 1–15 (MATKPQDANTTSREA) has biased composition (polar residues). A disordered region spans residues 1–25 (MATKPQDANTTSREAITSKADSPPR). Residues 32–33 (DS) and 64–65 (YG) contribute to the substrate site. The active-site Proton donor/acceptor is Cys-96. 97–98 (NT) contributes to the substrate binding site. Catalysis depends on Cys-208, which acts as the Proton donor/acceptor. A substrate-binding site is contributed by 209–210 (TH).

Belongs to the aspartate/glutamate racemases family.

It carries out the reaction L-glutamate = D-glutamate. It functions in the pathway cell wall biogenesis; peptidoglycan biosynthesis. Its function is as follows. Provides the (R)-glutamate required for cell wall biosynthesis. The polypeptide is Glutamate racemase (Yersinia pseudotuberculosis serotype IB (strain PB1/+)).